Consider the following 232-residue polypeptide: LexA repressor (232 aa).

Positions 26–46 (FDEMKDALDLRSKSGIHRLIT) form a DNA-binding region, H-T-H motif. Active-site for autocatalytic cleavage activity residues include S153 and K191.

The protein belongs to the peptidase S24 family. Homodimer.

The catalysed reaction is Hydrolysis of Ala-|-Gly bond in repressor LexA.. In terms of biological role, represses a number of genes involved in the response to DNA damage (SOS response), including recA and lexA. In the presence of single-stranded DNA, RecA interacts with LexA causing an autocatalytic cleavage which disrupts the DNA-binding part of LexA, leading to derepression of the SOS regulon and eventually DNA repair. The protein is LexA repressor of Bradyrhizobium sp. (strain ORS 278).